The sequence spans 1610 residues: MNTPKEEFQDWPIVRIAAHLPDLIVYGHFSPERPFMDYFDGVLMFVDISGFTAMTEKFSSAMYMDRGAEQLVEILNYHISAIVEKVLIFGGDILKFAGDALLALWRVERKQLKNIITVVIKCSLEIHGLFETQEWEEGLDIRVKIGLAAGHISMLVFGDETHSHFLVIGQAVDDVRLAQNMAQMNDVILSPNCWQLCDRSMIEIESVPDQRAVKVNFLKPPPNFNFDEFFTKCTTFMHYYPSGEHKNLLRLACTLKPDPELEMSLQKYVMESILKQIDNKQLQGYLSELRPVTIVFVNLMFEDQDKAEEIGPAIQDAYMHITSVLKIFQGQINKVFMFDKGCSFLCVFGFPGEKVPDELTHALECAMDIFDFCSQVHKIQTVSIGVASGIVFCGIVGHTVRHEYTVIGQKVNLAARMMMYYPGIVTCDSVTYNGSNLPAYFFKELPKKVMKGVADSGPLYQYWGRTEKVMFGMACLICNRKEDYPLLGRNKEINYFMYTMKKFLISNSSQVLMYEGLPGYGKSQILMKIEYLAQGKNHRIIAISLNKISFHQTFYTIQMFMANVLGLDTCKHYKERQTNLRNKVMTLLDEKFYCLLNDIFHVQFPISREISRMSTLKKQKQLEILFMKILKLIVKEERIIFIIDEAQFVDSTSWRFMEKLIRTLPIFIIMSLCPFVNIPCAAARAVIKNRNTTYIVIGAVQPNDISNKICLDLNVSCISKELDSYLGEGSCGIPFYCEELLKNLEHHEVLVFQQTESEEKTNRTWNNLFKYSIKLTEKLNMVTLHSDKESEEVCHLTSGVRLKNLSPPTSLKEISLIQLDSMRLSHQMLVRCAAIIGLTFTTELLFEILPCWNMKMMIKTLATLVESNIFYCFRNGKELQKALKQNDPSFEVHYRSLSLKPSEGMDHGEEEQLRELENEVIECHRIRFCNPMMQKTAYELWLKDQRKAMHLKCARFLEEDAHRCDHCRGRDFIPYHHFTVNIRLNALDMDAIKKMAMSHGFKTEEKLILSNSEIPETSAFFPENRSPEEIREKILNFFDHVLTKMKTSDEDIIPLESCQCEEILEIVILPLAHHFLALGENDKALYYFLEIASAYLIFCDNYMAYMYLNEGQKLLKTLKKDKSWSQTFESATFYSLKGEVCFNMGQIVLAKKMLRKALKLLNRIFPYNLISLFLHIHVEKNRHFHYVNRQAQESPPPGKKRLAQLYRQTVCLSLLWRIYSYSYLFHCKYYAHLAVMMQMNTALETQNCFQIIKAYLDYSLYHHLAGYKGVWFKYEVMAMEHIFNLPLKGEGIEIVAYVAETLVFNKLIMGHLDLAIELGSRALQMWALLQNPNRHYQSLCRLSRCLLLNSRYPQLIQVLGRLWELSVTQEHIFSKAFFYFVCLDILLYSGFVYRTFEECLEFIHQYENNRILKFHSGLLLGLYSSVAIWYARLQEWDNFYKFSNRAKNLLPRRTMTLTYYDGISRYMEGQVLHLQKQIKEQSENAQASGEELLKNLENLVAQNTTGPVFCPRLYHLMAYVCILMGDGQKCGLFLNTALRLSETQGNILEKCWLNMNKESWYSTSELKEDQWLQTILSLPSWEKIVAGRVNIQDLQKNKFLMRANTVDNHF.

2 consecutive Guanylate cyclase domains span residues 42–179 and 293–418; these read VLMF…RLAQ and TIVF…ARMM. Positions 47 and 48 each coordinate Mg(2+). An ATP-binding site is contributed by 47–52; the sequence is DISGFT. A hydrogencarbonate-binding site is contributed by Lys95. Mg(2+) is bound at residue Asp99. 2 residues coordinate ATP: Asp99 and Lys144. Hydrogencarbonate contacts are provided by Val167, Arg176, and Met337. ATP-binding positions include Val406 and 412–416; that span reads NLAAR.

Belongs to the adenylyl cyclase class-4/guanylyl cyclase family. Requires Mg(2+) as cofactor. It depends on Mn(2+) as a cofactor. Post-translationally, cleavage may occur to generate the active 48 kDa form. Detected in airway epithelial cells and testis (at protein level). Weakly expressed in multiple tissues. Expressed in brain, heart, kidney, liver, lung, pancreas, peripheral blood leukocytes, placenta, skeletal muscle, stomach, thymus, airway epithelial cells, duodenum, jejunum and ileum. Very low level of expression in bone.

It localises to the cell membrane. Its subcellular location is the cytoplasm. The protein localises to the cytoskeleton. It is found in the perinuclear region. The protein resides in the nucleus. It localises to the cell projection. Its subcellular location is the cilium. The protein localises to the mitochondrion. It catalyses the reaction ATP = 3',5'-cyclic AMP + diphosphate. Its activity is regulated as follows. Activated by manganese or magnesium ions. In the presence of magnesium ions, the enzyme is activated by bicarbonate. In the presence of manganese ions, the enzyme is inhibited by bicarbonate. In the absence of magnesium and bicarbonate, the enzyme is weakly activated by calcium. Calcium mildly increases the enzyme activity, also in the presence of magnesium ions. Functionally, catalyzes the formation of the signaling molecule cAMP. May function as sensor that mediates responses to changes in cellular bicarbonate and CO(2) levels. Has a critical role in mammalian spermatogenesis by producing the cAMP which regulates cAMP-responsive nuclear factors indispensable for sperm maturation in the epididymis. Induces capacitation, the maturational process that sperm undergo prior to fertilization. Involved in ciliary beat regulation. In Homo sapiens (Human), this protein is Adenylate cyclase type 10 (ADCY10).